An 882-amino-acid chain; its full sequence is Kelch repeat-containing protein 2 (882 aa).

Positions 41-60 (TPTLPPNQHRGISGASTALP) are disordered. Kelch repeat units follow at residues 99-143 (RIFV…PPRV), 153-207 (AYVV…IIAS), 213-267 (KLYL…AYDN), 268-317 (KLWV…VYKH), 319-369 (MCVL…LMKN), and 371-417 (KLLI…LCPG). T455 bears the Phosphothreonine mark. A compositionally biased stretch (basic and acidic residues) spans 480-496 (LDDKAFERKSDREEKKP). The segment at 480–516 (LDDKAFERKSDREEKKPQSSKVDSSINKESPGTGIKV) is disordered. Positions 498 to 509 (SSKVDSSINKES) are enriched in polar residues. S509 carries the post-translational modification Phosphoserine. Coiled coils occupy residues 550 to 685 (KNLF…QKIT) and 728 to 881 (NKIE…LEQK).

As to quaternary structure, interacts with KEL1.

This Saccharomyces cerevisiae (strain ATCC 204508 / S288c) (Baker's yeast) protein is Kelch repeat-containing protein 2 (KEL2).